The primary structure comprises 502 residues: ATP synthase subunit alpha (502 aa).

170–177 (GDRKTGKT) serves as a coordination point for ATP.

The protein belongs to the ATPase alpha/beta chains family. As to quaternary structure, F-type ATPases have 2 components, CF(1) - the catalytic core - and CF(0) - the membrane proton channel. CF(1) has five subunits: alpha(3), beta(3), gamma(1), delta(1), epsilon(1). CF(0) has four main subunits: a, b, b' and c.

The protein resides in the cellular thylakoid membrane. The enzyme catalyses ATP + H2O + 4 H(+)(in) = ADP + phosphate + 5 H(+)(out). Functionally, produces ATP from ADP in the presence of a proton gradient across the membrane. The alpha chain is a regulatory subunit. The sequence is that of ATP synthase subunit alpha from Microcystis aeruginosa (strain NIES-843 / IAM M-2473).